The chain runs to 266 residues: Dickkopf-related protein 1 (266 aa).

The N-terminal stretch at 1–31 (MMALGAAGATRVFVAMVAAALGGHPLLGVSA) is a signal peptide. Serine 61 carries O-linked (GalNAc...) serine glycosylation. Cystine bridges form between cysteine 85-cysteine 97, cysteine 91-cysteine 111, cysteine 114-cysteine 128, cysteine 121-cysteine 133, cysteine 127-cysteine 138, cysteine 189-cysteine 201, cysteine 195-cysteine 210, cysteine 200-cysteine 237, cysteine 220-cysteine 245, and cysteine 239-cysteine 263. The interval 85–138 (CAEDEECGTDEYCASPTRGGDAGVQICLACRKRRKRCMRHAMCCPGNYCKNGIC) is DKK-type Cys-1. Residues 189–263 (CLRSSDCASG…ASNSSRLHTC (75 aa)) form a DKK-type Cys-2 region. Asparagine 256 carries an N-linked (GlcNAc...) asparagine glycan.

This sequence belongs to the dickkopf family. Interacts with LRP6. Interacts (via the C-terminal Cys-rich domain) with LRP5 (via beta-propeller regions 3 and 4); the interaction, enhanced by MESD and or KREMEN, antagonizes Wnt-mediated signaling. Forms a ternary complex with LRP6 and KREM1. Interacts with KREM1. As to expression, placenta.

It localises to the secreted. Functionally, antagonizes canonical Wnt signaling by inhibiting LRP5/6 interaction with Wnt and by forming a ternary complex with the transmembrane protein KREMEN that promotes internalization of LRP5/6. DKKs play an important role in vertebrate development, where they locally inhibit Wnt regulated processes such as antero-posterior axial patterning, limb development, somitogenesis and eye formation. In the adult, Dkks are implicated in bone formation and bone disease, cancer and Alzheimer disease. Inhibits the pro-apoptotic function of KREMEN1 in a Wnt-independent manner, and has anti-apoptotic activity. This chain is Dickkopf-related protein 1 (DKK1), found in Homo sapiens (Human).